The chain runs to 406 residues: Tryptophan synthase beta chain (406 aa).

Position 99 is an N6-(pyridoxal phosphate)lysine (lysine 99).

The protein belongs to the TrpB family. In terms of assembly, tetramer of two alpha and two beta chains. It depends on pyridoxal 5'-phosphate as a cofactor.

It carries out the reaction (1S,2R)-1-C-(indol-3-yl)glycerol 3-phosphate + L-serine = D-glyceraldehyde 3-phosphate + L-tryptophan + H2O. Its pathway is amino-acid biosynthesis; L-tryptophan biosynthesis; L-tryptophan from chorismate: step 5/5. In terms of biological role, the beta subunit is responsible for the synthesis of L-tryptophan from indole and L-serine. The chain is Tryptophan synthase beta chain from Chelativorans sp. (strain BNC1).